Consider the following 460-residue polypeptide: tRNA modification GTPase MnmE (460 aa).

(6S)-5-formyl-5,6,7,8-tetrahydrofolate is bound by residues Arg-29, Glu-91, and Lys-132. In terms of domain architecture, TrmE-type G spans Gly-227 to Gly-383. Asn-237 provides a ligand contact to K(+). GTP contacts are provided by residues Asn-237 to Ser-242, Thr-256 to Thr-262, and Asp-281 to Gly-284. Ser-241 provides a ligand contact to Mg(2+). The K(+) site is built by Thr-256, Ile-258, and Thr-261. Thr-262 lines the Mg(2+) pocket. Position 460 (Lys-460) interacts with (6S)-5-formyl-5,6,7,8-tetrahydrofolate.

This sequence belongs to the TRAFAC class TrmE-Era-EngA-EngB-Septin-like GTPase superfamily. TrmE GTPase family. As to quaternary structure, homodimer. Heterotetramer of two MnmE and two MnmG subunits. K(+) serves as cofactor.

The protein localises to the cytoplasm. Exhibits a very high intrinsic GTPase hydrolysis rate. Involved in the addition of a carboxymethylaminomethyl (cmnm) group at the wobble position (U34) of certain tRNAs, forming tRNA-cmnm(5)s(2)U34. This is tRNA modification GTPase MnmE from Prochlorococcus marinus (strain MIT 9301).